The sequence spans 927 residues: Nonsense-mediated mRNA decay factor SMG8 (927 aa).

Disordered regions lie at residues 543–581 (NTGK…NTAS), 611–636 (QARS…DTEN), and 643–662 (QEPA…AVST). The segment covering 551–566 (QDEDAGEDEAEEEEGQ) has biased composition (acidic residues). Residues 613 to 633 (RSEQLSNSEQNTTRSGSSSVD) are compositionally biased toward polar residues. The span at 644–654 (EPAKKEAREDV) shows a compositional bias: basic and acidic residues.

It belongs to the SMG8 family.

Its function is as follows. Involved in nonsense-mediated decay (NMD) of mRNAs containing premature stop codons. Probable component of kinase complex containing nonC and recruited to stalled ribosomes. The protein is Nonsense-mediated mRNA decay factor SMG8 of Drosophila sechellia (Fruit fly).